The chain runs to 660 residues: Leucine-rich repeat transmembrane protein FLRT2 (660 aa).

A signal peptide spans 1-35 (MGLQTTKWPSHGAFFLKSWLIISLGLYSQVSKLLA). Intrachain disulfides connect C36/C42 and C40/C49. The 28-residue stretch at 36-63 (CPSVCRCDRNFVYCNERSLTSVPLGIPE) folds into the LRRNT domain. Residues 36 to 541 (CPSVCRCDRN…TTSHSMGSPF (506 aa)) lie on the Extracellular side of the membrane. LRR repeat units follow at residues 64–85 (GVTVLYLHNNQINNAGFPAELH), 89–109 (SVHTVYLYGNQLDEFPMNLPK), 110–131 (NVRVLHLQENNIQTISRAALAQ), 134–155 (KLEELHLDDNSISTVGVEDGAF), 160–181 (SLKLLFLSKNHLSSVPVGLPVD), 182–202 (LQELRVDENRIAVISDMAFQN), 205–225 (SLERLIVDGNLLTNKGIAEGT), 231–252 (KLKEFSIVRNSLSHPPPDLPGT), 253–274 (HLIRLYLQDNQINHIPLTAFSN), and 277–298 (KLERLDISNNQLRMLTQGVFDN). An N-linked (GlcNAc...) asparagine glycan is attached at N202. N298 carries an N-linked (GlcNAc...) asparagine glycan. The LRRCT domain maps to 310–362 (NPWFCDCSIKWVTEWLKYIPSSLNVRGFMCQGPEQVRGMAVRELNMNLLSCPT). Intrachain disulfides connect C314–C339 and C316–C360. The segment covering 373 to 409 (APSTASPTTQPPTLSIPNPSRSYTPPTPTTSKLPTIP) has biased composition (low complexity). The segment at 373-413 (APSTASPTTQPPTLSIPNPSRSYTPPTPTTSKLPTIPDWDG) is disordered. A Fibronectin type-III domain is found at 419–517 (PPISERIQLS…ICSEATTHAS (99 aa)). Residues N433 and N521 are each glycosylated (N-linked (GlcNAc...) asparagine). A helical membrane pass occupies residues 542 to 562 (LLAGLIGGAVIFVLVVLLSVF). At 563-660 (CWHMHKKGRY…SVPDLEHCHT (98 aa)) the chain is on the cytoplasmic side.

Self-associates (via leucine-rich repeats), giving rise to homooligomers. Interacts with FGFR1. Interacts with FGFR2. Interacts (via extracellular domain) with ADGRL1/LPHN1. Interacts (via extracellular domain) with ADGRL3 (via olfactomedin-like domain). Interacts (via extracellular domain) with UNC5D (via the first Ig-like domain). Can also interact (via extracellular domain) with UNC5B, but with much lower affinity. Interacts (via extracellular domain) with FN1. In terms of processing, N-glycosylated. Proteolytic cleavage in the juxtamembrane region gives rise to a soluble ectodomain. Cleavage is probably effected by a metalloprotease. As to expression, expressed in pancreas, skeletal muscle, brain, and heart.

Its subcellular location is the cell membrane. It is found in the endoplasmic reticulum membrane. The protein localises to the cell junction. The protein resides in the focal adhesion. It localises to the secreted. Its subcellular location is the extracellular space. It is found in the extracellular matrix. The protein localises to the microsome membrane. The protein resides in the synapse. It localises to the synaptosome. Functionally, functions in cell-cell adhesion, cell migration and axon guidance. Mediates cell-cell adhesion via its interactions with ADGRL3 and probably also other latrophilins that are expressed at the surface of adjacent cells. May play a role in the migration of cortical neurons during brain development via its interaction with UNC5D. Mediates axon growth cone collapse and plays a repulsive role in neuron guidance via its interaction with UNC5D, and possibly also other UNC-5 family members. Plays a role in fibroblast growth factor-mediated signaling cascades. Required for normal organization of the cardiac basement membrane during embryogenesis, and for normal embryonic epicardium and heart morphogenesis. The protein is Leucine-rich repeat transmembrane protein FLRT2 (FLRT2) of Homo sapiens (Human).